The chain runs to 498 residues: Protein disulfide-isomerase (498 aa).

Residues 1-23 form the signal peptide; the sequence is MASFRGSIWYCIFVLSLIAVAIS. Thioredoxin domains follow at residues 24-143 and 339-484; these read AAES…KQSG and YLKA…KNRD. An N-linked (GlcNAc...) asparagine glycan is attached at Asn-41. Active-site nucleophile residues include Cys-61, Cys-64, Cys-406, and Cys-409. Intrachain disulfides connect Cys-61/Cys-64 and Cys-406/Cys-409. A Prevents secretion from ER motif is present at residues 495–498; it reads KDEL.

This sequence belongs to the protein disulfide isomerase family.

It localises to the endoplasmic reticulum lumen. The enzyme catalyses Catalyzes the rearrangement of -S-S- bonds in proteins.. In terms of biological role, participates in the folding of proteins containing disulfide bonds, may be involved in glycosylation, prolyl hydroxylation and triglyceride transfer. In Ricinus communis (Castor bean), this protein is Protein disulfide-isomerase.